The sequence spans 354 residues: uncharacterized protein (354 aa).

9 helical membrane-spanning segments follow: residues 9–29 (MGKI…LIFS), 31–51 (ISIN…ISFT), 76–96 (NFGI…LIWV), 109–129 (FLNV…AIVV), 144–164 (IIFS…VLLI), 185–205 (GILV…ALGV), 278–298 (YGTL…GFFY), 306–326 (GIYL…IESG), and 327–347 (ILDI…IYAI).

The protein resides in the cell membrane. This is an uncharacterized protein from Methanocaldococcus jannaschii (strain ATCC 43067 / DSM 2661 / JAL-1 / JCM 10045 / NBRC 100440) (Methanococcus jannaschii).